The following is a 1528-amino-acid chain: Rho GTPase-activating protein 7 (1528 aa).

Disordered stretches follow at residues 72-94 (DFPGRPMGHLSKDVDENDSHEGE), 288-310 (MSAENGLEKSGFSQHQNKSPPKV), and 372-436 (ALST…TKPK). The span at 81 to 94 (LSKDVDENDSHEGE) shows a compositional bias: basic and acidic residues. The span at 374-384 (STSSSPSGTPT) shows a compositional bias: low complexity. The segment covering 396–436 (GSESGADTISVNQTRVNLSSDTESTDLPSSTPVANSGTKPK) has biased composition (polar residues). The SAM domain maps to 448–515 (KAEIEAKEAC…LNKCAVMKLE (68 aa)). Phosphoserine is present on residues serine 523, serine 526, and serine 566. Disordered stretches follow at residues 558–617 (PKQD…ATPR), 732–764 (RSVSNSTQTSSSSSQSETSSAVSTPSPVTRTRS), 829–876 (PSGN…SSRL), and 928–990 (SDEG…GVGA). Composition is skewed to low complexity over residues 591 to 605 (VSSVRSLSSTGSLPS) and 734 to 760 (VSNSTQTSSSSSQSETSSAVSTPSPVT). Residues 710–884 (QLNCVEISAL…RLSIYDNVPG (175 aa)) form a focal adhesion-targeting (FAT) region. Phosphoserine is present on serine 757. A compositionally biased stretch (basic and acidic residues) spans 851 to 862 (LRRENSSDSPKE). Residues 936-948 (ALDSVSPCPSSPK) show a composition bias toward polar residues. A compositionally biased stretch (basic and acidic residues) spans 950-960 (IHLDVDNDRTT). The segment covering 961 to 972 (PSDLDSTGNSLN) has biased composition (polar residues). The interval 1051 to 1073 (KHGFSWAVPKFMKRIKVPDYKDR) is polybasic cluster (PBR). The 207-residue stretch at 1078-1284 (VPLTVNVQRT…HMIAECKKLF (207 aa)) folds into the Rho-GAP domain. The region spanning 1314–1521 (GNDDSADYQH…RDSFSNQNTE (208 aa)) is the START domain.

As to quaternary structure, interacts with EF1A1, facilitates EF1A1 distribution to the membrane periphery and ruffles upon growth factor stimulation and suppresses cell migration. Interacts with tensin TNS1 (via N-terminus); the interaction is decreased by phosphorylation of TNS1. Interacts with TNS3 and PTEN; in resting cells, interacts with TNS3 (via C2 tensin-type domain) but, following growth factor stimulation, TNS3 and PTEN are phosphorylated which leads to weakened interaction with TNS3 and enhanced interaction with PTEN. Interacts (via C-terminus) with tensin TNS4 (via SH2 domain); the interaction is independent of tyrosine phosphorylation of DLC1. In terms of tissue distribution, highest level of expression in the spleen, with rather lower levels in prostate, testis, ovary, small intestine and colon, but none in the thymus.

Its subcellular location is the cytoplasm. It localises to the cell junction. It is found in the focal adhesion. The protein resides in the membrane. In terms of biological role, functions as a GTPase-activating protein for the small GTPases RHOA, RHOB, RHOC and CDC42, terminating their downstream signaling. This induces morphological changes and detachment through cytoskeletal reorganization, playing a critical role in biological processes such as cell migration and proliferation. Also functions in vivo as an activator of the phospholipase PLCD1. Active DLC1 increases cell migration velocity but reduces directionality. Required for growth factor-induced epithelial cell migration; in resting cells, interacts with TNS3 while PTEN interacts with the p85 regulatory subunit of the PI3K kinase complex but growth factor stimulation induces phosphorylation of TNS3 and PTEN, causing them to change their binding preference so that PTEN interacts with DLC1 and TNS3 interacts with p85. The PTEN-DLC1 complex translocates to the posterior of migrating cells to activate RHOA while the TNS3-p85 complex translocates to the leading edge of migrating cells to promote RAC1 activation. This chain is Rho GTPase-activating protein 7 (DLC1), found in Homo sapiens (Human).